The sequence spans 312 residues: Telomere-binding protein OPG077 (312 aa).

The protein belongs to the orthopoxvirus OPG077 family.

It is found in the virion. Functionally, DNA-binding protein which binds to the hairpin form of the viral telomeric sequence. Required for the production of mature virions (MV). This chain is Telomere-binding protein OPG077 (OPG077), found in Monkeypox virus.